The primary structure comprises 701 residues: Elongation factor G (701 aa).

The 283-residue stretch at 8 to 290 folds into the tr-type G domain; the sequence is KHYRNIGISA…AVIEYLPAPI (283 aa). GTP-binding positions include 17–24, 88–92, and 142–145; these read AHIDAGKT, DTPGH, and NKMD.

The protein belongs to the TRAFAC class translation factor GTPase superfamily. Classic translation factor GTPase family. EF-G/EF-2 subfamily.

The protein localises to the cytoplasm. Its function is as follows. Catalyzes the GTP-dependent ribosomal translocation step during translation elongation. During this step, the ribosome changes from the pre-translocational (PRE) to the post-translocational (POST) state as the newly formed A-site-bound peptidyl-tRNA and P-site-bound deacylated tRNA move to the P and E sites, respectively. Catalyzes the coordinated movement of the two tRNA molecules, the mRNA and conformational changes in the ribosome. The chain is Elongation factor G from Hamiltonella defensa subsp. Acyrthosiphon pisum (strain 5AT).